Consider the following 142-residue polypeptide: Calmodulin-alpha (142 aa).

Alanine 2 bears the N-acetylalanine mark. EF-hand domains lie at 8–43, 44–79, 81–116, and 117–142; these read EQIAEFKEAFSLFDKDGDGTITTKELGTVMRSLGQN, PTEAELQDMINEVDADGNGTIDFPEFLTMMARKMKD, DSEEEIREAFRVFDKDGNGYISAAELRHVMTNLGEK, and LTDEEVDEMIREADIDGDGQVNYEEF. Aspartate 21, aspartate 23, aspartate 25, threonine 27, glutamate 32, aspartate 57, aspartate 59, asparagine 61, threonine 63, glutamate 68, aspartate 94, aspartate 96, asparagine 98, tyrosine 100, and glutamate 105 together coordinate Ca(2+). Lysine 116 bears the N6,N6,N6-trimethyllysine mark. The Ca(2+) site is built by aspartate 130, aspartate 132, aspartate 134, glutamine 136, and glutamate 141.

It belongs to the calmodulin family.

Calmodulin mediates the control of a large number of enzymes, ion channels and other proteins by Ca(2+). Among the enzymes to be stimulated by the calmodulin-Ca(2+) complex are a number of protein kinases and phosphatases. In Arbacia punctulata (Punctuate sea urchin), this protein is Calmodulin-alpha.